Here is a 76-residue protein sequence, read N- to C-terminus: MAYIYALIFAIVVCMNTDVIQAEESQHDTLENVEYRLSCIPKGGECERMADTCCPGLQCLGCNPFNKENLGKCKCQ.

The signal sequence occupies residues 1–22 (MAYIYALIFAIVVCMNTDVIQA).

Post-translationally, contains 4 disulfide bonds. In terms of tissue distribution, expressed by the venom gland.

Its subcellular location is the secreted. In terms of biological role, inhibits voltage-gated calcium channel (Cav) currents in DRG neurons (IC(50)=1590 nM). This Scolopendra mutilans (Chinese red-headed centipede) protein is Omega-scoloptoxin(13)-Ssm2a.